We begin with the raw amino-acid sequence, 734 residues long: Photosystem I P700 chlorophyll a apoprotein A2 (734 aa).

The next 8 helical transmembrane spans lie at 46 to 69, 135 to 158, 175 to 199, 273 to 291, 330 to 353, 369 to 395, 417 to 439, and 517 to 535; these read IFAS…FHVA, LYNG…LHLQ, LNHH…HVAI, IAHH…GHMY, IHFQ…QHMY, AALY…IFFI, AIIS…LYVH, and FLVH…LILV. 2 residues coordinate [4Fe-4S] cluster: Cys-559 and Cys-568. A run of 2 helical transmembrane segments spans residues 575-596 and 643-665; these read AFYL…YWHW and LSVW…MFLI. Positions 654, 662, and 670 each coordinate chlorophyll a. Trp-671 is a phylloquinone binding site. A helical membrane pass occupies residues 707 to 727; the sequence is LVGLAHFSVGYIFTYAAFLIA.

It belongs to the PsaA/PsaB family. In terms of assembly, the PsaA/B heterodimer binds the P700 chlorophyll special pair and subsequent electron acceptors. PSI consists of a core antenna complex that captures photons, and an electron transfer chain that converts photonic excitation into a charge separation. The eukaryotic PSI reaction center is composed of at least 11 subunits. P700 is a chlorophyll a/chlorophyll a' dimer, A0 is one or more chlorophyll a, A1 is one or both phylloquinones and FX is a shared 4Fe-4S iron-sulfur center. serves as cofactor.

Its subcellular location is the plastid. The protein resides in the chloroplast thylakoid membrane. It carries out the reaction reduced [plastocyanin] + hnu + oxidized [2Fe-2S]-[ferredoxin] = oxidized [plastocyanin] + reduced [2Fe-2S]-[ferredoxin]. Its function is as follows. PsaA and PsaB bind P700, the primary electron donor of photosystem I (PSI), as well as the electron acceptors A0, A1 and FX. PSI is a plastocyanin-ferredoxin oxidoreductase, converting photonic excitation into a charge separation, which transfers an electron from the donor P700 chlorophyll pair to the spectroscopically characterized acceptors A0, A1, FX, FA and FB in turn. Oxidized P700 is reduced on the lumenal side of the thylakoid membrane by plastocyanin. This is Photosystem I P700 chlorophyll a apoprotein A2 from Morus indica (Mulberry).